We begin with the raw amino-acid sequence, 219 residues long: Urease subunit gamma/beta (219 aa).

Positions 1 to 101 are urease gamma; that stretch reads MFLTPREQEK…LVTVRNPIKS (101 aa). The interval 102–219 is urease beta; the sequence is SKKTLNTYII…IKRAKERGFA (118 aa).

This sequence in the N-terminal section; belongs to the urease gamma subunit family. The protein in the C-terminal section; belongs to the urease beta subunit family. Heterohexamer of 3 UreC (alpha) and 3 UreAB (gamma/beta) subunits.

It is found in the cytoplasm. The enzyme catalyses urea + 2 H2O + H(+) = hydrogencarbonate + 2 NH4(+). It participates in nitrogen metabolism; urea degradation; CO(2) and NH(3) from urea (urease route): step 1/1. This chain is Urease subunit gamma/beta, found in Sulfurisphaera tokodaii (strain DSM 16993 / JCM 10545 / NBRC 100140 / 7) (Sulfolobus tokodaii).